The chain runs to 362 residues: Ferrochelatase (362 aa).

Fe cation contacts are provided by H228 and E309.

The protein belongs to the ferrochelatase family.

The protein resides in the cytoplasm. The enzyme catalyses heme b + 2 H(+) = protoporphyrin IX + Fe(2+). It functions in the pathway porphyrin-containing compound metabolism; protoheme biosynthesis; protoheme from protoporphyrin-IX: step 1/1. In terms of biological role, catalyzes the ferrous insertion into protoporphyrin IX. This chain is Ferrochelatase, found in Bordetella pertussis (strain Tohama I / ATCC BAA-589 / NCTC 13251).